Here is a 3344-residue protein sequence, read N- to C-terminus: Genome polyprotein (3344 aa).

The Peptidase S30 domain maps to 408–547; that stretch reads IVGNSKINYI…RSVYAKMDQY (140 aa). Catalysis depends on for P1 proteinase activity residues histidine 456, aspartate 465, and serine 499. Residues 598-601 carry the Involved in interaction with stylet and aphid transmission motif; sequence KITC. The short motif at 856 to 858 is the Involved in virions binding and aphid transmission element; sequence PTK. Residues 882–1004 enclose the Peptidase C6 domain; sequence MYIAKKGYCY…DSEMKHYIVG (123 aa). Catalysis depends on for helper component proteinase activity residues cysteine 890 and histidine 963. Residues 1473–1625 enclose the Helicase ATP-binding domain; the sequence is EIAHSPEREF…TQFPTKIVTE (153 aa). ATP is bound at residue 1486–1493; that stretch reads GAVGSGKS. Positions 1575-1578 match the DECH box motif; the sequence is DECH. Residues 1644 to 1803 enclose the Helicase C-terminal domain; it reads DVTAFADNIL…GLPVMTHNVG (160 aa). Residues 2134–2141 carry the Nuclear localization signal motif; it reads KKGNKKGK. Tyrosine 2156 is modified (O-(5'-phospho-RNA)-tyrosine). The Peptidase C4 domain occupies 2283 to 2499; sequence GKSLCQGMRN…LSWGALKVWE (217 aa). Active-site for nuclear inclusion protein A activity residues include histidine 2327, aspartate 2362, and cysteine 2431. Residues 2761–2885 enclose the RdRp catalytic domain; the sequence is WVYCDADGSQ…AIHPDHEHVL (125 aa). Basic and acidic residues predominate over residues 3059-3093; the sequence is KNEAVDAGLNEKLKEKEKQKEKEKEKQKEKEKDGA. The tract at residues 3059–3116 is disordered; that stretch reads KNEAVDAGLNEKLKEKEKQKEKEKEKQKEKEKDGASDGNDVSTSTKTGERDRDVNVGT.

It belongs to the potyviridae genome polyprotein family. As to quaternary structure, interacts with host eIF4E protein (via cap-binding region); this interaction mediates the translation of the VPg-viral RNA conjugates. Part of a complex that comprises VPg, RNA, host EIF4E and EIF4G; this interaction mediates the translation of the VPg-viral RNA conjugates. VPg is uridylylated by the polymerase and is covalently attached to the 5'-end of the genomic RNA. This uridylylated form acts as a nucleotide-peptide primer for the polymerase. In terms of processing, potyviral RNA is expressed as two polyproteins which undergo post-translational proteolytic processing. Genome polyprotein is processed by NIa-pro, P1 and HC-pro proteinases resulting in the production of at least ten individual proteins. P3N-PIPO polyprotein is cleaved by P1 and HC-pro proteinases resulting in the production of three individual proteins. The P1 proteinase and the HC-pro cleave only their respective C-termini autocatalytically. 6K1 is essential for proper proteolytic separation of P3 from CI.

Its subcellular location is the host cytoplasmic vesicle. The protein localises to the host nucleus. It is found in the virion. The enzyme catalyses RNA(n) + a ribonucleoside 5'-triphosphate = RNA(n+1) + diphosphate. The catalysed reaction is Hydrolyzes glutaminyl bonds, and activity is further restricted by preferences for the amino acids in P6 - P1' that vary with the species of potyvirus, e.g. Glu-Xaa-Xaa-Tyr-Xaa-Gln-|-(Ser or Gly) for the enzyme from tobacco etch virus. The natural substrate is the viral polyprotein, but other proteins and oligopeptides containing the appropriate consensus sequence are also cleaved.. It catalyses the reaction Hydrolyzes a Gly-|-Gly bond at its own C-terminus, commonly in the sequence -Tyr-Xaa-Val-Gly-|-Gly, in the processing of the potyviral polyprotein.. In terms of biological role, required for aphid transmission and also has proteolytic activity. Only cleaves a Gly-Gly dipeptide at its own C-terminus. Interacts with virions and aphid stylets. Acts as a suppressor of RNA-mediated gene silencing, also known as post-transcriptional gene silencing (PTGS), a mechanism of plant viral defense that limits the accumulation of viral RNAs. May have RNA-binding activity. Functionally, has helicase activity. It may be involved in replication. Indispensable for virus replication. Its function is as follows. Mediates the cap-independent, EIF4E-dependent translation of viral genomic RNAs. Binds to the cap-binding site of host EIF4E and thus interferes with the host EIF4E-dependent mRNA export and translation. VPg-RNA directly binds EIF4E and is a template for transcription. Also forms trimeric complexes with EIF4E-EIF4G, which are templates for translation. In terms of biological role, has RNA-binding and proteolytic activities. Functionally, an RNA-dependent RNA polymerase that plays an essential role in the virus replication. Involved in aphid transmission, cell-to-cell and systemis movement, encapsidation of the viral RNA and in the regulation of viral RNA amplification. This chain is Genome polyprotein, found in Carica papaya (Papaya).